Consider the following 294-residue polypeptide: tRNA dimethylallyltransferase (294 aa).

11–18 contributes to the ATP binding site; it reads GPTAVGKT. 13–18 serves as a coordination point for substrate; it reads TAVGKT. The tract at residues 36–39 is interaction with substrate tRNA; it reads DSQQ.

The protein belongs to the IPP transferase family. As to quaternary structure, monomer. Mg(2+) serves as cofactor.

It catalyses the reaction adenosine(37) in tRNA + dimethylallyl diphosphate = N(6)-dimethylallyladenosine(37) in tRNA + diphosphate. Functionally, catalyzes the transfer of a dimethylallyl group onto the adenine at position 37 in tRNAs that read codons beginning with uridine, leading to the formation of N6-(dimethylallyl)adenosine (i(6)A). This chain is tRNA dimethylallyltransferase, found in Lactococcus lactis subsp. cremoris (strain MG1363).